Here is a 430-residue protein sequence, read N- to C-terminus: uncharacterized protein (430 aa).

The signal sequence occupies residues 1 to 19 (MKILLFVVLFFNVLVGIYS). A glycan (N-linked (GlcNAc...) asparagine) is linked at Asn-39. Residues 119–408 (LDPNSSPSPS…ELLEKNSDGN (290 aa)) are disordered. The segment covering 124–168 (SPSPSPSPSPSPSPSPSPSPSPSPSPSPSPSPSPSPSPSPSPSPS) has biased composition (pro residues). 2 stretches are compositionally biased toward low complexity: residues 169–253 (PSSS…TPSQ) and 263–285 (PTPT…TQTP). A compositionally biased stretch (polar residues) spans 286–303 (ISSRPMSISTEKPSSSEE). Asn-312 is a glycosylation site (N-linked (GlcNAc...) asparagine). Positions 316-325 (SEDKKKDSES) are enriched in basic and acidic residues. Low complexity predominate over residues 326-370 (KSSQSESPSPSASASESESASESASASTSVSVSASPLPIMDSSSS). N-linked (GlcNAc...) asparagine glycosylation occurs at Asn-408.

The protein localises to the secreted. This is an uncharacterized protein from Dictyostelium discoideum (Social amoeba).